The sequence spans 336 residues: MSVVGSFEQLERLRDLFYKLLDLRDTLRERGVAWPKPLSEEAALGTVRVKVGFPAMLKRGVIMDVTNVEQAQIAEDAGAVGVMVLDKLPYDVRRAGGVARMADLKVIEEVMAHVTIPVSAKVRIGHYYEAFLLEQVGVDLIDESEVLTPVDEQHHINKWMFTVPFVNGARELCEALRRISEGASMIRSKGEAGTGNVAEAVKHFKSIYGAIKSLAAGDEERVRDFARQCQVPFELVALTAKLQRLPVITFAAGGIATPADAALMMWLGADGVFVGSGIFKSQDPRERAEAIVLATAHWDDPETVVEAQKMVSERGAMMGIDIRTLKPEELLQTRGV.

Residue aspartate 64 participates in D-ribose 5-phosphate binding. The Schiff-base intermediate with D-ribose 5-phosphate role is filled by lysine 121. Glycine 193 is a binding site for D-ribose 5-phosphate. Residue lysine 205 coordinates D-glyceraldehyde 3-phosphate. D-ribose 5-phosphate-binding positions include glycine 254 and 275–276; that span reads GS.

It belongs to the PdxS/SNZ family. In the presence of PdxT, forms a dodecamer of heterodimers.

The enzyme catalyses aldehydo-D-ribose 5-phosphate + D-glyceraldehyde 3-phosphate + L-glutamine = pyridoxal 5'-phosphate + L-glutamate + phosphate + 3 H2O + H(+). It functions in the pathway cofactor biosynthesis; pyridoxal 5'-phosphate biosynthesis. Catalyzes the formation of pyridoxal 5'-phosphate from ribose 5-phosphate (RBP), glyceraldehyde 3-phosphate (G3P) and ammonia. The ammonia is provided by the PdxT subunit. Can also use ribulose 5-phosphate and dihydroxyacetone phosphate as substrates, resulting from enzyme-catalyzed isomerization of RBP and G3P, respectively. The sequence is that of Pyridoxal 5'-phosphate synthase subunit PdxS from Pyrobaculum aerophilum (strain ATCC 51768 / DSM 7523 / JCM 9630 / CIP 104966 / NBRC 100827 / IM2).